The sequence spans 128 residues: Large ribosomal subunit protein bL12 (128 aa).

The protein belongs to the bacterial ribosomal protein bL12 family. In terms of assembly, homodimer. Part of the ribosomal stalk of the 50S ribosomal subunit. Forms a multimeric L10(L12)X complex, where L10 forms an elongated spine to which 2 to 4 L12 dimers bind in a sequential fashion. Binds GTP-bound translation factors.

Its function is as follows. Forms part of the ribosomal stalk which helps the ribosome interact with GTP-bound translation factors. Is thus essential for accurate translation. This Synechococcus sp. (strain CC9311) protein is Large ribosomal subunit protein bL12.